We begin with the raw amino-acid sequence, 336 residues long: Poly(A) RNA polymerase cid12 (336 aa).

Aspartate 77 and aspartate 79 together coordinate Mg(2+). The PAP-associated domain occupies 209–263 (ALLQKFFYFWGVEWTYELFVLRPLTGQIVPKLQKGWLNEVQPNLLSIEDPIDRNN). Serine 325 bears the Phosphoserine mark. Threonine 327 carries the phosphothreonine modification. A Phosphoserine modification is found at serine 329.

This sequence belongs to the DNA polymerase type-B-like family. As to quaternary structure, cid12, hrr1 and rdp1 interact forming the RNA-directed RNA polymerase complex (RDRC). The RDRC complex interacts with the RITS complex via interaction between ago1 and hrr1. Clr4 has a role in mediating this interaction. Mg(2+) is required as a cofactor. Requires Mn(2+) as cofactor.

The protein localises to the cytoplasm. It localises to the nucleus. The enzyme catalyses RNA(n) + ATP = RNA(n)-3'-adenine ribonucleotide + diphosphate. Has a role in the RNA interference (RNAi) pathway which is important for heterochromatin formation and accurate chromosome segregation. A member of the RNA-directed RNA polymerase complex (RDRC) which is involved in the generation of small interfering RNAs (siRNAs) and mediate their association with the RNA-induced transcriptional silencing (RITS) complex. RITS acts as a priming complex for dsRNA synthesis at the site of non-coding centromeric RNA. The chain is Poly(A) RNA polymerase cid12 (cid12) from Schizosaccharomyces pombe (strain 972 / ATCC 24843) (Fission yeast).